Consider the following 25-residue polypeptide: HVDKKVADKVLLLKQLRIMRLLTRL.

Its subcellular location is the secreted. Active against Gram-positive bacteria B.megaterium and M.luteus, Gram-negative bacteria E.coli SBS363 and D22, K.pneumoniae, S.typhimurium and P.aeruginosa, yeast C.albicans and filamentous fungi F.culmorum, N.crassa, N.hematococca and T.viridae. Inactive against Gram-positive bacteria B.subtilis, S.pyogenes, B.thuringiensis and S.aureus, Gram-negative bacteria E.cloacae and E.carotovora and filamentous fungus B.bassiana. The polypeptide is Spinigerin (Pseudacanthotermes spiniger).